A 321-amino-acid polypeptide reads, in one-letter code: Ribose-phosphate pyrophosphokinase C (321 aa).

D132 and D147 together coordinate Mg(2+). The tract at residues 214–229 is binding of phosphoribosylpyrophosphate; the sequence is SGKVAIIIGSIADTCE.

The protein belongs to the ribose-phosphate pyrophosphokinase family. Mg(2+) serves as cofactor.

Its subcellular location is the cytoplasm. It carries out the reaction D-ribose 5-phosphate + ATP = 5-phospho-alpha-D-ribose 1-diphosphate + AMP + H(+). It functions in the pathway metabolic intermediate biosynthesis; 5-phospho-alpha-D-ribose 1-diphosphate biosynthesis; 5-phospho-alpha-D-ribose 1-diphosphate from D-ribose 5-phosphate (route I): step 1/1. The sequence is that of Ribose-phosphate pyrophosphokinase C (prsC) from Dictyostelium discoideum (Social amoeba).